We begin with the raw amino-acid sequence, 157 residues long: Probable succinate transporter subunit YjjB (157 aa).

A run of 4 helical transmembrane segments spans residues 15–35 (ILAA…VQAL), 50–70 (MILM…SMLV), 87–107 (VFTV…TAMI), and 121–141 (LMIT…ALSV).

It belongs to the ThrE exporter (TC 2.A.79) family. As to quaternary structure, the transporter is composed of YjjB and YjjP.

It localises to the cell inner membrane. Its function is as follows. Involved in succinate export with YjjP. Both proteins are required for export. In Shigella dysenteriae serotype 1 (strain Sd197), this protein is Probable succinate transporter subunit YjjB.